Consider the following 156-residue polypeptide: Small ribosomal subunit protein uS7 (156 aa).

It belongs to the universal ribosomal protein uS7 family. In terms of assembly, part of the 30S ribosomal subunit. Contacts proteins S9 and S11.

Its function is as follows. One of the primary rRNA binding proteins, it binds directly to 16S rRNA where it nucleates assembly of the head domain of the 30S subunit. Is located at the subunit interface close to the decoding center, probably blocks exit of the E-site tRNA. This is Small ribosomal subunit protein uS7 from Brucella abortus (strain S19).